The following is a 227-amino-acid chain: tRNA (guanine-N(1)-)-methyltransferase (227 aa).

S-adenosyl-L-methionine-binding positions include glycine 112 and 132–137 (IGDFIL).

It belongs to the RNA methyltransferase TrmD family. Homodimer.

It localises to the cytoplasm. It catalyses the reaction guanosine(37) in tRNA + S-adenosyl-L-methionine = N(1)-methylguanosine(37) in tRNA + S-adenosyl-L-homocysteine + H(+). Functionally, specifically methylates guanosine-37 in various tRNAs. The polypeptide is tRNA (guanine-N(1)-)-methyltransferase (Sulfurovum sp. (strain NBC37-1)).